A 329-amino-acid polypeptide reads, in one-letter code: DNA-directed RNA polymerase subunit alpha (329 aa).

The alpha N-terminal domain (alpha-NTD) stretch occupies residues 1-235; it reads MQGSVTEFLK…EQLDAFVDLR (235 aa). The alpha C-terminal domain (alpha-CTD) stretch occupies residues 249-329; the sequence is FDPILLRPVD…NWPPASIAED (81 aa).

The protein belongs to the RNA polymerase alpha chain family. Homodimer. The RNAP catalytic core consists of 2 alpha, 1 beta, 1 beta' and 1 omega subunit. When a sigma factor is associated with the core the holoenzyme is formed, which can initiate transcription.

The catalysed reaction is RNA(n) + a ribonucleoside 5'-triphosphate = RNA(n+1) + diphosphate. In terms of biological role, DNA-dependent RNA polymerase catalyzes the transcription of DNA into RNA using the four ribonucleoside triphosphates as substrates. The protein is DNA-directed RNA polymerase subunit alpha of Actinobacillus pleuropneumoniae serotype 5b (strain L20).